The chain runs to 131 residues: D-ribose pyranase (131 aa).

Histidine 20 serves as the catalytic Proton donor. Substrate is bound by residues aspartate 28, histidine 98, and 120–122; that span reads YAN.

This sequence belongs to the RbsD / FucU family. RbsD subfamily. Homodecamer.

Its subcellular location is the cytoplasm. It carries out the reaction beta-D-ribopyranose = beta-D-ribofuranose. It functions in the pathway carbohydrate metabolism; D-ribose degradation; D-ribose 5-phosphate from beta-D-ribopyranose: step 1/2. Catalyzes the interconversion of beta-pyran and beta-furan forms of D-ribose. This is D-ribose pyranase from Bacillus mycoides (strain KBAB4) (Bacillus weihenstephanensis).